The primary structure comprises 367 residues: Cytochrome P450 119 (367 aa).

Heme is bound by residues His-76, Arg-80, Thr-257, Arg-259, His-315, and Cys-317.

Belongs to the cytochrome P450 family. Heme is required as a cofactor.

It is found in the cytoplasm. The chain is Cytochrome P450 119 (cyp119) from Sulfurisphaera tokodaii (strain DSM 16993 / JCM 10545 / NBRC 100140 / 7) (Sulfolobus tokodaii).